We begin with the raw amino-acid sequence, 88 residues long: Small ribosomal subunit protein uS17 (88 aa).

The protein belongs to the universal ribosomal protein uS17 family. Part of the 30S ribosomal subunit.

One of the primary rRNA binding proteins, it binds specifically to the 5'-end of 16S ribosomal RNA. The sequence is that of Small ribosomal subunit protein uS17 from Ectopseudomonas mendocina (strain ymp) (Pseudomonas mendocina).